Here is a 215-residue protein sequence, read N- to C-terminus: 25 kDa ookinete surface antigen (215 aa).

The signal sequence occupies residues 1 to 16 (MNMSYLFFFFFIQLVL). Residues 29–58 (CKDGFLIQMSNHFECNCNPGFVLTSESTCE) enclose the EGF-like 1; truncated domain. EGF-like domains are found at residues 59–104 (NKVE…SICV), 104–148 (VPNE…NTCT), and 151–191 (GQTE…NACI). Intrachain disulfides connect C63–C78, C72–C90, C92–C103, C108–C118, C113–C131, C133–C147, C155–C166, C159–C175, and C177–C190. N144 and N163 each carry an N-linked (GlcNAc...) asparagine glycan. S192 carries GPI-anchor amidated serine lipidation. A propeptide spans 193–215 (FSLFNILNLSIIFIISLIYFYII) (removed in mature form). A glycan (N-linked (GlcNAc...) asparagine) is linked at N200.

The protein localises to the cell membrane. This chain is 25 kDa ookinete surface antigen, found in Plasmodium gallinaceum.